We begin with the raw amino-acid sequence, 395 residues long: Putative ankyrin repeat protein RF_0950 (395 aa).

ANK repeat units lie at residues 3–32 (YQKE…NPNT), 36–65 (YGKL…DPNA), 69–98 (IKDP…NPNV), 101–130 (RHEN…DPNQ), 134–166 (NGNT…EKAL), 172–201 (NGET…TVNI), and 205–234 (AGNT…ELNE). Positions 272 to 395 (KTKLIYQGGD…YLKVPILKEK (124 aa)) constitute a Glutamine amidotransferase type-1 domain. Cys-377 serves as the catalytic Nucleophile.

This Rickettsia felis (strain ATCC VR-1525 / URRWXCal2) (Rickettsia azadi) protein is Putative ankyrin repeat protein RF_0950.